A 39-amino-acid polypeptide reads, in one-letter code: Photosystem II reaction center protein L (39 aa).

The chain crosses the membrane as a helical span at residues 18–38; that stretch reads SLYLGLLLVFVLGILFSSYFF.

This sequence belongs to the PsbL family. PSII is composed of 1 copy each of membrane proteins PsbA, PsbB, PsbC, PsbD, PsbE, PsbF, PsbH, PsbI, PsbJ, PsbK, PsbL, PsbM, PsbT, PsbX, PsbY, PsbZ, Psb30/Ycf12, peripheral proteins PsbO, CyanoQ (PsbQ), PsbU, PsbV and a large number of cofactors. It forms dimeric complexes.

Its subcellular location is the cellular thylakoid membrane. Its function is as follows. One of the components of the core complex of photosystem II (PSII). PSII is a light-driven water:plastoquinone oxidoreductase that uses light energy to abstract electrons from H(2)O, generating O(2) and a proton gradient subsequently used for ATP formation. It consists of a core antenna complex that captures photons, and an electron transfer chain that converts photonic excitation into a charge separation. This subunit is found at the monomer-monomer interface and is required for correct PSII assembly and/or dimerization. In Trichormus variabilis (strain ATCC 29413 / PCC 7937) (Anabaena variabilis), this protein is Photosystem II reaction center protein L.